Reading from the N-terminus, the 298-residue chain is GTPase Era (298 aa).

The Era-type G domain maps to 3 to 170 (KSGFVTIVGR…VELMKKAMPE (168 aa)). The interval 11 to 18 (GRPNVGKS) is G1. 11-18 (GRPNVGKS) provides a ligand contact to GTP. Positions 37–41 (QTTRN) are G2. The segment at 58-61 (DTPG) is G3. GTP contacts are provided by residues 58-62 (DTPGI) and 120-123 (NKVD). Residues 120–123 (NKVD) are G4. Residues 149-151 (ISA) form a G5 region. Residues 201–278 (LRDEVPHGIA…NLKIWVKVRK (78 aa)) enclose the KH type-2 domain.

This sequence belongs to the TRAFAC class TrmE-Era-EngA-EngB-Septin-like GTPase superfamily. Era GTPase family. As to quaternary structure, monomer.

The protein resides in the cytoplasm. It localises to the cell membrane. In terms of biological role, an essential GTPase that binds both GDP and GTP, with rapid nucleotide exchange. Plays a role in 16S rRNA processing and 30S ribosomal subunit biogenesis and possibly also in cell cycle regulation and energy metabolism. In Clostridium beijerinckii (strain ATCC 51743 / NCIMB 8052) (Clostridium acetobutylicum), this protein is GTPase Era.